The following is a 400-amino-acid chain: 3-phenylpropionate/cinnamic acid dioxygenase ferredoxin--NAD(+) reductase component (400 aa).

An FAD-binding site is contributed by 5-36; it reads TIIIVGGGQAAAMAAASLRQQGFTGELHLFSD. 146–174 is an NAD(+) binding site; sequence SVVIVGAGTIGLELAASATQRRCKVTVIE.

The protein belongs to the bacterial ring-hydroxylating dioxygenase ferredoxin reductase family. As to quaternary structure, this dioxygenase system consists of four proteins: the two subunits of the hydroxylase component (HcaE and HcaF), a ferredoxin (HcaC) and a ferredoxin reductase (HcaD). It depends on FAD as a cofactor.

It carries out the reaction 2 reduced [2Fe-2S]-[ferredoxin] + NAD(+) + H(+) = 2 oxidized [2Fe-2S]-[ferredoxin] + NADH. Its pathway is aromatic compound metabolism; 3-phenylpropanoate degradation. Its function is as follows. Part of the multicomponent 3-phenylpropionate dioxygenase, that converts 3-phenylpropionic acid (PP) and cinnamic acid (CI) into 3-phenylpropionate-dihydrodiol (PP-dihydrodiol) and cinnamic acid-dihydrodiol (CI-dihydrodiol), respectively. This is 3-phenylpropionate/cinnamic acid dioxygenase ferredoxin--NAD(+) reductase component from Escherichia coli O157:H7.